Reading from the N-terminus, the 78-residue chain is MAAHCQVTGAGPGFGHSISHSHRRTKRRFDPNIQKKTYWVPSLRRNVTLTLSAKGIKTIDVRGIDAVVADLIAKGVKL.

The interval 1–30 (MAAHCQVTGAGPGFGHSISHSHRRTKRRFD) is disordered.

This sequence belongs to the bacterial ribosomal protein bL28 family.

This chain is Large ribosomal subunit protein bL28, found in Micrococcus luteus (strain ATCC 4698 / DSM 20030 / JCM 1464 / CCM 169 / CCUG 5858 / IAM 1056 / NBRC 3333 / NCIMB 9278 / NCTC 2665 / VKM Ac-2230) (Micrococcus lysodeikticus).